Consider the following 318-residue polypeptide: Ribosomal RNA small subunit methyltransferase H (318 aa).

Residues 37-39, D57, F83, D104, and Q111 each bind S-adenosyl-L-methionine; that span reads GGH.

The protein belongs to the methyltransferase superfamily. RsmH family.

Its subcellular location is the cytoplasm. The catalysed reaction is cytidine(1402) in 16S rRNA + S-adenosyl-L-methionine = N(4)-methylcytidine(1402) in 16S rRNA + S-adenosyl-L-homocysteine + H(+). In terms of biological role, specifically methylates the N4 position of cytidine in position 1402 (C1402) of 16S rRNA. This is Ribosomal RNA small subunit methyltransferase H from Neisseria gonorrhoeae (strain ATCC 700825 / FA 1090).